The sequence spans 367 residues: Epoxide hydrolase 3 (367 aa).

A helical transmembrane segment spans residues G21–P41. D173 serves as the catalytic Nucleophile. Y285 (proton donor) is an active-site residue. Residue H340 is the Proton acceptor of the active site.

It belongs to the AB hydrolase superfamily. Epoxide hydrolase family.

It is found in the microsome membrane. The enzyme catalyses an epoxide + H2O = an ethanediol. The catalysed reaction is 9,10-epoxyoctadecanoate + H2O = 9,10-dihydroxyoctadecanoate. It catalyses the reaction 9,10-epoxy-(12Z)-octadecenoate + H2O = 9,10-dihydroxy-(12Z)-octadecenoate. It carries out the reaction 8,9-epoxy-(5Z,11Z,14Z)-eicosatrienoate + H2O = 8,9-dihydroxy-(5Z,11Z,14Z)-eicosatrienoate. The enzyme catalyses 11,12-epoxy-(5Z,8Z,14Z)-eicosatrienoate + H2O = 11,12-dihydroxy-(5Z,8Z,14Z)-eicosatrienoate. The catalysed reaction is 14,15-epoxy-(5Z,8Z,11Z)-eicosatrienoate + H2O = 14,15-dihydroxy-(5Z,8Z,11Z)-eicosatrienoate. Inhibited by 1-(1-acetylpiperidin-4-yl)-3-(4-(trifl uoromethoxy)phenyl)urea (TPAU), 1-cyclohexyl-3-dodecylurea (CDU), 12-(3-adamantan-1-yl-ureido)-dodecanoic acid (AUDA), 1-((3S, 5S, 7S)-adamantan-1-yl)-3-(5-(2-(2-ethoxyethoxy) ethoxy)pentyl)urea (AEPU) and to a lesser extent by 8-(3-((3S, 5S, 7S)-adamantan-1-yl)ureido) octanoic acid (AUOA). Its function is as follows. Catalyzes the hydrolysis of epoxide-containing fatty acids. Active in vitro against epoxyeicosatrienoic acids (EETs) including 8,9-EET, 9,10-EET, 11,12-EET and 14,15-EET and leukotoxin. In Xenopus tropicalis (Western clawed frog), this protein is Epoxide hydrolase 3 (ephx3).